A 448-amino-acid polypeptide reads, in one-letter code: Histidine--tRNA ligase (448 aa).

2 disordered regions span residues 1-20 (MAIK…SPKL) and 428-448 (AGQA…QEKA).

It belongs to the class-II aminoacyl-tRNA synthetase family. In terms of assembly, homodimer.

It is found in the cytoplasm. The enzyme catalyses tRNA(His) + L-histidine + ATP = L-histidyl-tRNA(His) + AMP + diphosphate + H(+). The sequence is that of Histidine--tRNA ligase from Deinococcus deserti (strain DSM 17065 / CIP 109153 / LMG 22923 / VCD115).